Consider the following 102-residue polypeptide: Putative nuclear receptor corepressor 1-like protein NCOR1P1 (102 aa).

The segment covering 1-18 has biased composition (polar residues); it reads MSSSGYPPNQGAFSTEQS. A disordered region spans residues 1–68; sequence MSSSGYPPNQ…DQNASPSKLS (68 aa). Positions 68–100 form a coiled coil; that stretch reads SKEELIECMDRVDREIAKVEQQILKLKKKQVKV.

Belongs to the N-CoR nuclear receptor corepressors family.

The sequence is that of Putative nuclear receptor corepressor 1-like protein NCOR1P1 (NCOR1P1) from Homo sapiens (Human).